The sequence spans 664 residues: UvrABC system protein B (664 aa).

The Helicase ATP-binding domain occupies 23-180; sequence EGLNRGMRFQ…ERLARIGYQR (158 aa). 36-43 lines the ATP pocket; sequence GVTGSGKT. Positions 89–112 match the Beta-hairpin motif; that stretch reads YYDYYQPEAYIPTKDLYIEKNADI. The Helicase C-terminal domain maps to 429 to 588; it reads DLVNEIVKVK…ITPRSVIKPL (160 aa). The region spanning 622–657 is the UVR domain; sequence EEYMAVLEEEMYRAASELRYEDAAALRDELFRIREE.

Belongs to the UvrB family. As to quaternary structure, forms a heterotetramer with UvrA during the search for lesions. Interacts with UvrC in an incision complex.

The protein resides in the cytoplasm. In terms of biological role, the UvrABC repair system catalyzes the recognition and processing of DNA lesions. A damage recognition complex composed of 2 UvrA and 2 UvrB subunits scans DNA for abnormalities. Upon binding of the UvrA(2)B(2) complex to a putative damaged site, the DNA wraps around one UvrB monomer. DNA wrap is dependent on ATP binding by UvrB and probably causes local melting of the DNA helix, facilitating insertion of UvrB beta-hairpin between the DNA strands. Then UvrB probes one DNA strand for the presence of a lesion. If a lesion is found the UvrA subunits dissociate and the UvrB-DNA preincision complex is formed. This complex is subsequently bound by UvrC and the second UvrB is released. If no lesion is found, the DNA wraps around the other UvrB subunit that will check the other stand for damage. The protein is UvrABC system protein B of Thermotoga petrophila (strain ATCC BAA-488 / DSM 13995 / JCM 10881 / RKU-1).